A 316-amino-acid chain; its full sequence is L-lactate dehydrogenase (316 aa).

NAD(+) contacts are provided by residues Val-16, Asp-37, Lys-42, Tyr-68, and 82 to 83 (GA). Residues Gln-85 and Arg-91 each coordinate substrate. Residues Ser-104, 121–123 (AAN), and Ser-146 contribute to the NAD(+) site. Position 123–126 (123–126 (NPVD)) interacts with substrate. 151–154 (DSAR) contributes to the substrate binding site. Beta-D-fructose 1,6-bisphosphate contacts are provided by Arg-156 and His-171. Catalysis depends on His-178, which acts as the Proton acceptor. Phosphotyrosine is present on Tyr-222. Position 231 (Thr-231) interacts with substrate.

Belongs to the LDH/MDH superfamily. LDH family. As to quaternary structure, homotetramer.

Its subcellular location is the cytoplasm. It carries out the reaction (S)-lactate + NAD(+) = pyruvate + NADH + H(+). It functions in the pathway fermentation; pyruvate fermentation to lactate; (S)-lactate from pyruvate: step 1/1. Its activity is regulated as follows. Allosterically activated by fructose 1,6-bisphosphate (FBP). In terms of biological role, catalyzes the conversion of lactate to pyruvate. In Staphylococcus epidermidis (strain ATCC 12228 / FDA PCI 1200), this protein is L-lactate dehydrogenase.